Reading from the N-terminus, the 305-residue chain is 2-pyrone-4,6-dicarbaxylate hydrolase (305 aa).

Residues 32-34 (HCH), Tyr-50, Thr-78, Arg-125, Arg-131, Tyr-158, and His-182 each bind substrate. The active-site Proton acceptor is Asp-258. Residue Asn-263 coordinates substrate.

This sequence belongs to the metallo-dependent hydrolases superfamily. PDC hydrolase family.

The enzyme catalyses 2-oxo-2H-pyran-4,6-dicarboxylate + H2O = (1E)-4-oxobut-1-ene-1,2,4-tricarboxylate + H(+). With respect to regulation, strongly inhibited by 1 mM Zn(2+), Cu(2+), Mn(2+) and Co(2+) ions. Also inhibited by 5,5'-dithiobis(2-nitrobenzoic acid) (Ellman reagent) in vitro. Involved in the degradation of aromatic compounds via the protocatechuate 4,5-cleavage pathway. Catalyzes the hydrolysis of 2-pyrone-4,6-dicarboxylate (PDC) to oxalomesaconate (OMA). Also catalyzes the reverse reaction. The sequence is that of 2-pyrone-4,6-dicarbaxylate hydrolase from Comamonas testosteroni (Pseudomonas testosteroni).